The sequence spans 483 residues: Triacylglycerol lipase ptl3 (483 aa).

Residues 141-340 enclose the PNPLA domain; sequence LILSGGGTFG…DNDIPHAKLT (200 aa). Positions 145–150 match the GXGXXG motif; it reads GGGTFG. Positions 172–176 match the GXSXG motif; sequence GSSAG. The active-site Nucleophile is the S174. D327 functions as the Proton acceptor in the catalytic mechanism.

Its subcellular location is the cytoplasm. The protein resides in the lipid droplet. The catalysed reaction is a triacylglycerol + H2O = a diacylglycerol + a fatty acid + H(+). Its function is as follows. Lipid particle-localized triacylglycerol (TAG) lipase. The lipid droplet/particle is a lipid storage compartment which serves as a depot of energy and building blocks for membrane lipid biosynthesis. Involved in the mobilization of the non-polar storage lipids triacylglycerols (TAGs) from lipid particles by hydrolysis of TAGs, releasing and supplying specific fatty acids to the appropriate metabolic pathways. The chain is Triacylglycerol lipase ptl3 (ptl3) from Schizosaccharomyces pombe (strain 972 / ATCC 24843) (Fission yeast).